Reading from the N-terminus, the 132-residue chain is uncharacterized protein (132 aa).

Positions 1–25 (MRFTKVVGFLSVLGLAAVFPLTAQA) are cleaved as a signal peptide.

This is an uncharacterized protein from Bacillus subtilis (strain 168).